Here is a 479-residue protein sequence, read N- to C-terminus: Aspartyl/glutamyl-tRNA(Asn/Gln) amidotransferase subunit B (479 aa).

The protein belongs to the GatB/GatE family. GatB subfamily. As to quaternary structure, heterotrimer of A, B and C subunits.

It carries out the reaction L-glutamyl-tRNA(Gln) + L-glutamine + ATP + H2O = L-glutaminyl-tRNA(Gln) + L-glutamate + ADP + phosphate + H(+). The catalysed reaction is L-aspartyl-tRNA(Asn) + L-glutamine + ATP + H2O = L-asparaginyl-tRNA(Asn) + L-glutamate + ADP + phosphate + 2 H(+). In terms of biological role, allows the formation of correctly charged Asn-tRNA(Asn) or Gln-tRNA(Gln) through the transamidation of misacylated Asp-tRNA(Asn) or Glu-tRNA(Gln) in organisms which lack either or both of asparaginyl-tRNA or glutaminyl-tRNA synthetases. The reaction takes place in the presence of glutamine and ATP through an activated phospho-Asp-tRNA(Asn) or phospho-Glu-tRNA(Gln). The sequence is that of Aspartyl/glutamyl-tRNA(Asn/Gln) amidotransferase subunit B from Myxococcus xanthus (strain DK1622).